The chain runs to 267 residues: AMP/ADP-polyphosphate phosphotransferase (267 aa).

The protein belongs to the polyphosphate kinase 2 (PPK2) family. Class III subfamily. It depends on Mn(2+) as a cofactor.

It carries out the reaction [phosphate](n) + ADP = [phosphate](n+1) + AMP. It catalyses the reaction [phosphate](n) + ATP = [phosphate](n+1) + ADP. Its function is as follows. Uses inorganic polyphosphate (polyP) as a donor to convert both AMP to ADP and ADP to ATP. Can also use GMP, CMP, UMP, GDP, CDP and UDP. The polypeptide is AMP/ADP-polyphosphate phosphotransferase (Meiothermus ruber (strain ATCC 35948 / DSM 1279 / VKM B-1258 / 21) (Thermus ruber)).